The primary structure comprises 120 residues: Large ribosomal subunit protein uL22 (120 aa).

This sequence belongs to the universal ribosomal protein uL22 family. In terms of assembly, part of the 50S ribosomal subunit.

Functionally, this protein binds specifically to 23S rRNA; its binding is stimulated by other ribosomal proteins, e.g. L4, L17, and L20. It is important during the early stages of 50S assembly. It makes multiple contacts with different domains of the 23S rRNA in the assembled 50S subunit and ribosome. The globular domain of the protein is located near the polypeptide exit tunnel on the outside of the subunit, while an extended beta-hairpin is found that lines the wall of the exit tunnel in the center of the 70S ribosome. The protein is Large ribosomal subunit protein uL22 of Acaryochloris marina (strain MBIC 11017).